We begin with the raw amino-acid sequence, 500 residues long: Lysine--tRNA ligase (500 aa).

Mg(2+)-binding residues include Glu410 and Glu417.

It belongs to the class-II aminoacyl-tRNA synthetase family. As to quaternary structure, homodimer. The cofactor is Mg(2+).

Its subcellular location is the cytoplasm. The catalysed reaction is tRNA(Lys) + L-lysine + ATP = L-lysyl-tRNA(Lys) + AMP + diphosphate. The chain is Lysine--tRNA ligase from Shewanella loihica (strain ATCC BAA-1088 / PV-4).